The primary structure comprises 120 residues: Large ribosomal subunit protein uL18 (120 aa).

Belongs to the universal ribosomal protein uL18 family. In terms of assembly, part of the 50S ribosomal subunit; part of the 5S rRNA/L5/L18/L25 subcomplex. Contacts the 5S and 23S rRNAs.

Functionally, this is one of the proteins that bind and probably mediate the attachment of the 5S RNA into the large ribosomal subunit, where it forms part of the central protuberance. The sequence is that of Large ribosomal subunit protein uL18 from Brucella anthropi (strain ATCC 49188 / DSM 6882 / CCUG 24695 / JCM 21032 / LMG 3331 / NBRC 15819 / NCTC 12168 / Alc 37) (Ochrobactrum anthropi).